A 1078-amino-acid chain; its full sequence is Zinc finger protein 827 (1078 aa).

The span at 1–10 (MPRRKQEQPK) shows a compositional bias: basic and acidic residues. The tract at residues 1–14 (MPRRKQEQPKRLPS) is mediates direct interaction with RBBP4. Residues 1–76 (MPRRKQEQPK…PDTSLGSATP (76 aa)) form a disordered region. Residues 3–5 (RRK) carry the RRK motif; mediates NuRD recruitment to telomeres motif. 2 stretches are compositionally biased toward polar residues: residues 33 to 42 (YGNSSETPSE) and 62 to 76 (EQST…SATP). Glycyl lysine isopeptide (Lys-Gly) (interchain with G-Cter in SUMO2) cross-links involve residues Lys-175, Lys-215, and Lys-225. The interval 307 to 341 (SLLPDDPLPLPSSEKKPEKVTPPPPPPPPTAQPPQ) is disordered. A compositionally biased stretch (pro residues) spans 326-338 (VTPPPPPPPPTAQ). Residues Lys-357 and Lys-369 each participate in a glycyl lysine isopeptide (Lys-Gly) (interchain with G-Cter in SUMO2) cross-link. 3 C2H2-type zinc fingers span residues 371–393 (FQCP…MVIH), 399–421 (HQCP…MKVH), and 430–452 (FQCQ…MRCH). Residues Lys-463, Lys-472, Lys-520, Lys-546, Lys-577, Lys-584, and Lys-594 each participate in a glycyl lysine isopeptide (Lys-Gly) (interchain with G-Cter in SUMO2) cross-link. The interval 466-490 (IPDPDVKGSPHLSDSGCLGQQREGG) is disordered. Positions 594 to 640 (KEEPKEEESLSMPLPRSSYVFSPEPEVSTPSVSEDPLTPQEGKGSVL) are disordered. Residues 613-627 (VFSPEPEVSTPSVSE) are compositionally biased toward low complexity. Glycyl lysine isopeptide (Lys-Gly) (interchain with G-Cter in SUMO2) cross-links involve residues Lys-636 and Lys-655. Lys-670 participates in a covalent cross-link: Glycyl lysine isopeptide (Lys-Gly) (interchain with G-Cter in SUMO1); alternate. Lys-670 participates in a covalent cross-link: Glycyl lysine isopeptide (Lys-Gly) (interchain with G-Cter in SUMO2); alternate. Residues Lys-701, Lys-707, Lys-739, Lys-775, and Lys-795 each participate in a glycyl lysine isopeptide (Lys-Gly) (interchain with G-Cter in SUMO2) cross-link. 2 C2H2-type zinc fingers span residues 814–836 (FPCD…LSLH) and 842–864 (YKCH…LTVH). Glycyl lysine isopeptide (Lys-Gly) (interchain with G-Cter in SUMO2) cross-links involve residues Lys-867 and Lys-888. 2 C2H2-type zinc fingers span residues 894 to 916 (YSCH…MSLH) and 926 to 949 (ICCT…GTKH). Positions 945–957 (IGTKHTGDDRKTP) are enriched in basic and acidic residues. The tract at residues 945 to 990 (IGTKHTGDDRKTPSESNSPSSSSLSTLSDSANGKDDSDSSQKNKGG) is disordered. Lys-955 participates in a covalent cross-link: Glycyl lysine isopeptide (Lys-Gly) (interchain with G-Cter in SUMO2). Residues 958 to 974 (SESNSPSSSSLSTLSDS) show a composition bias toward low complexity. Residues 976–985 (NGKDDSDSSQ) are compositionally biased toward basic and acidic residues. Lys-1011 participates in a covalent cross-link: Glycyl lysine isopeptide (Lys-Gly) (interchain with G-Cter in SUMO2). 2 consecutive C2H2-type zinc fingers follow at residues 1016 to 1038 (FECV…LQIH) and 1044 to 1066 (FECD…KKCH).

This sequence belongs to the krueppel C2H2-type zinc-finger protein family. Part of a transcription inhibitory ribonucleoprotein complex composed at least of the circular RNA circZNF827, HNRNPK and HNRNPL. Interacts with the nucleosome remodeling and histone deacetylase/NuRD complex. Interacts with RBBP4; the interaction is direct and recruits RBBP4, a component of the NuRD complex, to telomeres.

It is found in the nucleus. The protein localises to the chromosome. The protein resides in the telomere. In terms of biological role, as part of a ribonucleoprotein complex composed at least of HNRNPK, HNRNPL and the circular RNA circZNF827 that nucleates the complex on chromatin, may negatively regulate the transcription of genes involved in neuronal differentiation. Could also recruit the nucleosome remodeling and histone deacetylase/NuRD complex to telomeric regions of chromosomes to regulate chromatin remodeling as part of telomere maintenance. This is Zinc finger protein 827 (Znf827) from Mus musculus (Mouse).